The primary structure comprises 1621 residues: Ferredoxin-dependent glutamate synthase, chloroplastic (1621 aa).

Residues 1–57 constitute a chloroplast transit peptide; that stretch reads MALQSAPKLLYSSPSPSVFSANERRVAFSDFVGLSKKRSRRRRIAGTFRNFPALSAV. The Nucleophile role is filled by cysteine 105. Residues 105–504 enclose the Glutamine amidotransferase type-2 domain; sequence CGVGFIANLD…PGMMISVDLS (400 aa). Residue 1183–1240 participates in FMN binding; that stretch reads LSETHQTLISNGLRERVILRVDGGLKCGVDVMMAAAMGADEYGFGSLAMIATGCVMAR. Residues cysteine 1236, cysteine 1242, and cysteine 1247 each coordinate [3Fe-4S] cluster.

Belongs to the glutamate synthase family. In terms of assembly, interacts with ferredoxin. Interacts (via FMN-binding domain) with SQD1. [3Fe-4S] cluster is required as a cofactor. The cofactor is FMN. Expressed in young leaves. Not detected in mature leaves.

The protein localises to the plastid. It localises to the chloroplast stroma. The enzyme catalyses 2 oxidized [2Fe-2S]-[ferredoxin] + 2 L-glutamate = L-glutamine + 2 reduced [2Fe-2S]-[ferredoxin] + 2-oxoglutarate + 2 H(+). Its pathway is amino-acid biosynthesis; L-glutamate biosynthesis via GLT pathway; L-glutamate from 2-oxoglutarate and L-glutamine (ferredoxin route): step 1/1. The protein operates within energy metabolism; nitrogen metabolism. Inhibited by N-bromosuccinimide, which is specific for modification of tryptophan residues probably involved in the electron transfer from ferredoxin. Its function is as follows. Catalyzes the reductive conversion of 2-oxoglutarate plus glutamine to two molecules of glutamate, using reduced ferredoxin as the electron donor. Contains one FMN but no FAD. The FMN-binding domain is also involved in the delivery of sulfite to the reaction center of SQD1. The sequence is that of Ferredoxin-dependent glutamate synthase, chloroplastic from Spinacia oleracea (Spinach).